The chain runs to 238 residues: Octanoyltransferase (238 aa).

The region spanning 40 to 220 is the BPL/LPL catalytic domain; that stretch reads AGGSDALLLL…RVCDALDGRL (181 aa). Substrate is bound by residues 78 to 85, 150 to 152, and 163 to 165; these read RGGKITWH, AIG, and GFA. Catalysis depends on cysteine 181, which acts as the Acyl-thioester intermediate.

Belongs to the LipB family.

Its subcellular location is the cytoplasm. It catalyses the reaction octanoyl-[ACP] + L-lysyl-[protein] = N(6)-octanoyl-L-lysyl-[protein] + holo-[ACP] + H(+). The protein operates within protein modification; protein lipoylation via endogenous pathway; protein N(6)-(lipoyl)lysine from octanoyl-[acyl-carrier-protein]: step 1/2. Catalyzes the transfer of endogenously produced octanoic acid from octanoyl-acyl-carrier-protein onto the lipoyl domains of lipoate-dependent enzymes. Lipoyl-ACP can also act as a substrate although octanoyl-ACP is likely to be the physiological substrate. This Mycobacterium sp. (strain JLS) protein is Octanoyltransferase.